A 361-amino-acid polypeptide reads, in one-letter code: Beta-hexosaminidase (361 aa).

Residues D69, R77, R144, and K174–H175 contribute to the substrate site. The active-site Proton donor/acceptor is the H187. The active-site Nucleophile is D258.

The protein belongs to the glycosyl hydrolase 3 family. NagZ subfamily.

Its subcellular location is the cytoplasm. The enzyme catalyses Hydrolysis of terminal non-reducing N-acetyl-D-hexosamine residues in N-acetyl-beta-D-hexosaminides.. It participates in cell wall biogenesis; peptidoglycan recycling. Plays a role in peptidoglycan recycling by cleaving the terminal beta-1,4-linked N-acetylglucosamine (GlcNAc) from peptide-linked peptidoglycan fragments, giving rise to free GlcNAc, anhydro-N-acetylmuramic acid and anhydro-N-acetylmuramic acid-linked peptides. The sequence is that of Beta-hexosaminidase from Neisseria meningitidis serogroup B (strain ATCC BAA-335 / MC58).